Consider the following 1042-residue polypeptide: Protein phosphatase Slingshot homolog 1 (1042 aa).

Residues 1-12 (MALVTLQRSPTP) are compositionally biased toward polar residues. Positions 1–29 (MALVTLQRSPTPSAASSSASNSELEAGSD) are disordered. N-acetylalanine is present on A2. Positions 13–22 (SAASSSASNS) are enriched in low complexity. S37 and S57 each carry phosphoserine. One can recognise a DEK-C domain in the interval 249 to 304 (ERTERLIKAKLRSIMMSQDLENVTSKEIRNELEKQMNCNLKEFKEFIDNEMLLILG). A Tyrosine-protein phosphatase domain is found at 308 to 449 (KPSLIFDHLY…LSEYEGILDA (142 aa)). Residue C393 is the Phosphocysteine intermediate of the active site. Residue S516 is modified to Phosphoserine. Disordered stretches follow at residues 576 to 609 (FGNS…ASTQ), 668 to 766 (MERH…PHCD), 858 to 900 (IPEE…LDHT), and 915 to 942 (PTSS…KPGL). Residues 675–693 (SSSAICTQPTFLPHVTSSP) are compositionally biased toward polar residues. Residues 697–712 (ASSRSRAPERPASGPA) are compositionally biased toward low complexity. The segment covering 886 to 900 (LQKSPTSTLPRLDHT) has biased composition (polar residues). S889 carries the post-translational modification Phosphoserine. The interval 889 to 1042 (SPTSTLPRLD…LKSPSRVNKS (154 aa)) is interaction with YWHAG. The segment covering 917–935 (SSSISSNLTRSSSSDSIHS) has biased composition (low complexity). The residue at position 970 (S970) is a Phosphoserine. Over residues 985–995 (SSEADTSTIAD) the composition is skewed to polar residues. The interval 985–1042 (SSEADTSTIADSQDAKCGLSSSFLPEPQSAPRDPAATSKSSGKSAPEHLKSPSRVNKS) is disordered.

It belongs to the protein-tyrosine phosphatase family. As to quaternary structure, interacts with the 14-3-3 proteins YWHAB, YWHAG, YWHAQ, and YWHAZ. Interaction with 14-3-3 proteins inhibits phosphatase activity and also blocks recruitment to lamellipodia and stimulation by actin. Interacts with actin and this stimulates phosphatase activity. Interacts with LIMK1. Phosphorylated. Inhibitory phosphorylation by PAK4 promotes binding to YWHAZ. Phosphorylation at Ser-970 is decreased by stimuli which promote actin reorganization and lamellipodia formation. Can be dephosphorylated and activated by PPP3CA/calcineurin A. Phosphorylation decreases immediately prior to telophase. In terms of tissue distribution, expressed in brain, heart, kidney and thymus. Also expressed at lower levels in liver, skeletal muscle, small intestine and spleen.

Its subcellular location is the cytoplasm. The protein resides in the cytoskeleton. It localises to the cleavage furrow. The protein localises to the midbody. The enzyme catalyses O-phospho-L-tyrosyl-[protein] + H2O = L-tyrosyl-[protein] + phosphate. It carries out the reaction O-phospho-L-seryl-[protein] + H2O = L-seryl-[protein] + phosphate. The catalysed reaction is O-phospho-L-threonyl-[protein] + H2O = L-threonyl-[protein] + phosphate. Its function is as follows. Protein phosphatase which regulates actin filament dynamics. Dephosphorylates and activates the actin binding/depolymerizing factor cofilin, which subsequently binds to actin filaments and stimulates their disassembly. Inhibitory phosphorylation of cofilin is mediated by LIMK1, which may also be dephosphorylated and inactivated by this protein. The protein is Protein phosphatase Slingshot homolog 1 of Mus musculus (Mouse).